We begin with the raw amino-acid sequence, 350 residues long: Glycerol-1-phosphate dehydrogenase [NAD(P)+] (350 aa).

NAD(+) is bound by residues 96 to 100 (GNIID) and 118 to 121 (TAPS). Aspartate 123 contributes to the substrate binding site. Serine 127 contributes to the NAD(+) binding site. Position 170 (aspartate 170) interacts with substrate. The Zn(2+) site is built by aspartate 170 and histidine 250. Histidine 254 serves as a coordination point for substrate. Histidine 266 is a Zn(2+) binding site.

This sequence belongs to the glycerol-1-phosphate dehydrogenase family. In terms of assembly, homodimer. Zn(2+) is required as a cofactor.

The protein localises to the cytoplasm. The enzyme catalyses sn-glycerol 1-phosphate + NAD(+) = dihydroxyacetone phosphate + NADH + H(+). The catalysed reaction is sn-glycerol 1-phosphate + NADP(+) = dihydroxyacetone phosphate + NADPH + H(+). Its pathway is membrane lipid metabolism; glycerophospholipid metabolism. Its function is as follows. Catalyzes the NAD(P)H-dependent reduction of dihydroxyacetonephosphate (DHAP or glycerone phosphate) to glycerol 1-phosphate (G1P). The G1P thus generated is used as the glycerophosphate backbone of phospholipids in the cellular membranes of Archaea. The protein is Glycerol-1-phosphate dehydrogenase [NAD(P)+] of Sulfurisphaera tokodaii (strain DSM 16993 / JCM 10545 / NBRC 100140 / 7) (Sulfolobus tokodaii).